Reading from the N-terminus, the 321-residue chain is Mitochondrial coenzyme A transporter SLC25A42 (321 aa).

3 Solcar repeats span residues 33–119 (RSVL…YKGI), 131–216 (LPPV…LKKT), and 226–314 (PFPY…TQIL). A run of 6 helical transmembrane segments spans residues 35–55 (VLNS…AVAP), 91–111 (LWRG…IQFC), 137–154 (LLAG…TYPL), 191–208 (GFTP…LSFF), 232–252 (LVFG…LDVV), and 295–315 (VKGP…QILL).

It belongs to the mitochondrial carrier (TC 2.A.29) family.

The protein localises to the mitochondrion inner membrane. It catalyses the reaction ADP(out) + CoA(in) = ADP(in) + CoA(out). It carries out the reaction 3'-dephospho-CoA(in) + ADP(out) = 3'-dephospho-CoA(out) + ADP(in). The catalysed reaction is adenosine 3',5'-bisphosphate(in) + ADP(out) = adenosine 3',5'-bisphosphate(out) + ADP(in). The enzyme catalyses AMP(in) + ADP(out) = AMP(out) + ADP(in). It catalyses the reaction dADP(in) + ADP(out) = dADP(out) + ADP(in). It carries out the reaction ADP(in) + ATP(out) = ADP(out) + ATP(in). Mitochondrial carrier mediating the transport of coenzyme A (CoA) in mitochondria in exchange for intramitochondrial (deoxy)adenine nucleotides and adenosine 3',5'-diphosphate. The chain is Mitochondrial coenzyme A transporter SLC25A42 (slc25a42) from Danio rerio (Zebrafish).